The sequence spans 617 residues: Chaperone protein DnaK (617 aa).

Thr-174 is modified (phosphothreonine; by autocatalysis). Residues 575–592 (AQAQQQAQQQAQGQQGAQ) show a composition bias toward low complexity. Positions 575–617 (AQAQQQAQQQAQGQQGAQTDNQTGQNDGKTIDVDYEEVDDDDK) are disordered. Polar residues predominate over residues 593–602 (TDNQTGQNDG). Acidic residues predominate over residues 607-617 (VDYEEVDDDDK).

It belongs to the heat shock protein 70 family.

Its function is as follows. Acts as a chaperone. The chain is Chaperone protein DnaK from Halothermothrix orenii (strain H 168 / OCM 544 / DSM 9562).